The following is a 538-amino-acid chain: Calcium-dependent protein kinase 8 (538 aa).

Positions 1–26 (MGNCCGTPATAEEGGKRRRRGKQKKA) are disordered. G2 carries the N-myristoyl glycine lipid modification. A compositionally biased stretch (basic residues) spans 16–25 (KRRRRGKQKK). Residues 64–322 (YELGGELGRG…AEQVLEHPWL (259 aa)) form the Protein kinase domain. Residues 70–78 (LGRGEFGIT) and K93 contribute to the ATP site. The Proton acceptor role is filled by D188. The tract at residues 328 to 358 (MPDIPLGDAVRARLQQFAAMNKLKKKALKVI) is autoinhibitory domain. 4 EF-hand domains span residues 365–400 (EEAA…LGNQ), 401–436 (MPDS…VRKI), 437–472 (GNDE…EIDG), and 473–508 (NDED…GTDW). 19 residues coordinate Ca(2+): D378, S380, N382, Q384, D389, D414, D416, N418, E425, D450, N452, S454, Y456, E461, D486, D488, D490, K492, and E497.

It belongs to the protein kinase superfamily. Ser/Thr protein kinase family. CDPK subfamily.

It localises to the membrane. The catalysed reaction is L-seryl-[protein] + ATP = O-phospho-L-seryl-[protein] + ADP + H(+). It carries out the reaction L-threonyl-[protein] + ATP = O-phospho-L-threonyl-[protein] + ADP + H(+). Its activity is regulated as follows. Activated by calcium. Autophosphorylation may play an important role in the regulation of the kinase activity. Functionally, may play a role in signal transduction pathways that involve calcium as a second messenger. The polypeptide is Calcium-dependent protein kinase 8 (Oryza sativa subsp. japonica (Rice)).